The following is a 367-amino-acid chain: 2-aminoethylphosphonate--pyruvate transaminase (367 aa).

Lys-194 carries the post-translational modification N6-(pyridoxal phosphate)lysine.

This sequence belongs to the class-V pyridoxal-phosphate-dependent aminotransferase family. PhnW subfamily. As to quaternary structure, homodimer. Requires pyridoxal 5'-phosphate as cofactor.

The enzyme catalyses (2-aminoethyl)phosphonate + pyruvate = phosphonoacetaldehyde + L-alanine. In terms of biological role, involved in phosphonate degradation. In Salmonella dublin (strain CT_02021853), this protein is 2-aminoethylphosphonate--pyruvate transaminase.